The primary structure comprises 495 residues: Trigger factor (495 aa).

In terms of domain architecture, PPIase FKBP-type spans 169–254 (GDRVTIDYLG…VKEVAAPGEV (86 aa)). The segment at 439-495 (ALLADDESEDKPAAKKAAPKKKAAKAEATEAAAEGEEAAVPKKKAAPKKKAAEDSAE) is disordered.

It belongs to the FKBP-type PPIase family. Tig subfamily.

It is found in the cytoplasm. The catalysed reaction is [protein]-peptidylproline (omega=180) = [protein]-peptidylproline (omega=0). Its function is as follows. Involved in protein export. Acts as a chaperone by maintaining the newly synthesized protein in an open conformation. Functions as a peptidyl-prolyl cis-trans isomerase. The protein is Trigger factor of Rhizobium rhizogenes (strain K84 / ATCC BAA-868) (Agrobacterium radiobacter).